Here is a 1224-residue protein sequence, read N- to C-terminus: Serine/threonine-protein kinase CST20 (1224 aa).

A compositionally biased stretch (polar residues) spans 1–18 (MSILSENNPTPTSITDPN). Disordered stretches follow at residues 1-378 (MSIL…TAHN) and 403-464 (TNSS…HSQE). Low complexity-rich tracts occupy residues 57 to 70 (NTTSANTSSLSLGS) and 95 to 119 (DSGSGDIDDSQQSHNNNNNESNPES). Residues 144–155 (HQGDDSDNEKQY) are compositionally biased toward basic and acidic residues. Composition is skewed to polar residues over residues 169 to 191 (DSYSLGTLESPGTLNALETNNVS), 201 to 218 (TSSLEDLSLSLQHQNENA), and 231 to 240 (PTSKTSSFHD). The span at 242–251 (SSVISSSTSV) shows a compositional bias: low complexity. 2 stretches are compositionally biased toward polar residues: residues 256–271 (SNPTSTRGSHLSSYKS) and 305–324 (DTLSSATNSPNLLRNDTLQG). Low complexity-rich tracts occupy residues 343 to 375 (NTSATSRNTSGTSTSTVVKNSRSGTSKSTSTST) and 433 to 462 (KVRGVFSSMFGKNKSTSSSSSSNSGSNSHS). The 14-residue stretch at 469–482 (ISTPFNAKHLAHVG) folds into the CRIB domain. Disordered regions lie at residues 539–825 (FHFD…ALAD) and 861–913 (LREK…KQAA). Polar residues predominate over residues 544–555 (NKSSSSGWSNEN). The segment covering 564–575 (SNSGSGSGGGGA) has biased composition (gly residues). The segment covering 598–607 (ITPSQSMPTK) has biased composition (polar residues). Residues 608-622 (TESKQSENQHPHEDN) show a composition bias toward basic and acidic residues. Polar residues predominate over residues 623–636 (ATQYTPRTPTSHVQ). Composition is skewed to low complexity over residues 664 to 677 (PSSQSLPRSDSQSD), 690 to 704 (SPSKIKIRSISSKSL), and 730 to 743 (SIPKSKSHSASLSS). The segment covering 744-755 (QLRPATNGSTTA) has biased composition (polar residues). The span at 783-801 (APPPPPSAPPAPPVPPAPP) shows a compositional bias: pro residues. Positions 805 to 820 (LSEQTSEIPQQRTAPS) are enriched in polar residues. A compositionally biased stretch (basic and acidic residues) spans 861–870 (LREKNERQNR). The segment covering 871–886 (QQETGQNNADTASGGS) has biased composition (polar residues). A Protein kinase domain is found at 947-1199 (YVDLVKIGQG…ADELLHDNFI (253 aa)). ATP is bound by residues 953–961 (IGQGASGGV) and lysine 977. The Proton acceptor role is filled by aspartate 1067.

The protein belongs to the protein kinase superfamily. STE Ser/Thr protein kinase family. STE20 subfamily.

The protein localises to the cytoplasm. It is found in the nucleus. The catalysed reaction is L-seryl-[protein] + ATP = O-phospho-L-seryl-[protein] + ADP + H(+). It carries out the reaction L-threonyl-[protein] + ATP = O-phospho-L-threonyl-[protein] + ADP + H(+). MAP4K component of the MAPK pathway required for the mating pheromone response, and the regulation of cell polarity and cell cycle. Phosphorylates histone H2B to form H2BS10ph. Required for hyphal formation and virulence. This is Serine/threonine-protein kinase CST20 (CST20) from Candida albicans (strain WO-1) (Yeast).